Reading from the N-terminus, the 399-residue chain is Argininosuccinate synthase (399 aa).

ATP-binding positions include 10–18 (AYSGGVDTS) and Ala-38. Residue Tyr-89 coordinates L-citrulline. Gly-119 lines the ATP pocket. Positions 121, 125, and 126 each coordinate L-aspartate. Asn-125 contacts L-citrulline. Residues Arg-129, Ser-177, Ser-186, Glu-262, and Tyr-274 each contribute to the L-citrulline site.

It belongs to the argininosuccinate synthase family. Type 1 subfamily. In terms of assembly, homotetramer.

It localises to the cytoplasm. The catalysed reaction is L-citrulline + L-aspartate + ATP = 2-(N(omega)-L-arginino)succinate + AMP + diphosphate + H(+). The protein operates within amino-acid biosynthesis; L-arginine biosynthesis; L-arginine from L-ornithine and carbamoyl phosphate: step 2/3. The protein is Argininosuccinate synthase of Acaryochloris marina (strain MBIC 11017).